A 329-amino-acid polypeptide reads, in one-letter code: Cysteine synthase (329 aa).

Lys48 carries the post-translational modification N6-(pyridoxal phosphate)lysine. Pyridoxal 5'-phosphate is bound by residues Asn78, 183–187, and Ser278; that span reads GTGGT.

It belongs to the cysteine synthase/cystathionine beta-synthase family. In terms of assembly, homodimer. Requires pyridoxal 5'-phosphate as cofactor.

The enzyme catalyses O-acetyl-L-serine + hydrogen sulfide = L-cysteine + acetate. It functions in the pathway amino-acid biosynthesis; L-cysteine biosynthesis; L-cysteine from L-serine: step 2/2. Its function is as follows. Catalyzes the conversion of O-acetylserine (OAS) to cysteine through the elimination of acetate and addition of hydrogen sulfide. This Synechococcus elongatus (strain ATCC 33912 / PCC 7942 / FACHB-805) (Anacystis nidulans R2) protein is Cysteine synthase (srpG).